The chain runs to 181 residues: Adenylate kinase (181 aa).

Residue 10–15 coordinates ATP; it reads GAGKGT. Residues 30 to 59 form an NMP region; it reads STGDLFRANISQGTELGKQAQEYMDAGKLV. AMP-binding positions include T31, R36, 57–59, 85–88, and Q92; these read KLV and GFPR. The segment at 126 to 132 is LID; sequence SRGRNDD. Residue R127 coordinates ATP. Positions 129 and 140 each coordinate AMP. An ATP-binding site is contributed by G166.

The protein belongs to the adenylate kinase family. As to quaternary structure, monomer.

Its subcellular location is the cytoplasm. The enzyme catalyses AMP + ATP = 2 ADP. Its pathway is purine metabolism; AMP biosynthesis via salvage pathway; AMP from ADP: step 1/1. In terms of biological role, catalyzes the reversible transfer of the terminal phosphate group between ATP and AMP. Plays an important role in cellular energy homeostasis and in adenine nucleotide metabolism. This is Adenylate kinase from Corynebacterium urealyticum (strain ATCC 43042 / DSM 7109).